Consider the following 338-residue polypeptide: MRSLLLLSIVFFVVTVSANKTRELCMKSLEHAKVDTSNEARQDGIDLYKHMFENYPPLRKYFKNREEYTAEDVQNDPFFAKQGQKILLACHVLCATYDDRETFNAYTRELLDRHARDHVHMPPEVWTDFWKLFEEYLGKKTTLDEPTKQAWHEIGREFAKEINKHGRHAVRHQCMRSLQHIDIGHSETAKQNGIDLYKHMFENYPSMREAFKDRENYTAEDVQKDPFFVKQGQRILLACHLLCASYDDEETFHMYVHELMERHERLGVQLPDQHWTDFWKLFEEFLEKKSHLCEHTKHAWAVIGKEFAYEATRHGKEHHEHKEEHKEEHKEEHKEEQH.

The signal sequence occupies residues 1 to 18 (MRSLLLLSIVFFVVTVSA). N19 carries N-linked (GlcNAc...) asparagine glycosylation. Globin domains follow at residues 25-167 (CMKS…KHGR) and 174-316 (CMRS…RHGK). Q82 and H114 together coordinate heme b. N-linked (GlcNAc...) asparagine glycosylation occurs at N216. Heme b-binding residues include Q231 and H263. A disordered region spans residues 313–338 (RHGKEHHEHKEEHKEEHKEEHKEEQH).

The protein belongs to the globin family. As to quaternary structure, homooctamer.

The protein resides in the secreted. The protein localises to the extracellular space. Functionally, has an extremely high oxygen affinity. In a vacuum, it takes several minutes to release its oxygen compared to milliseconds for a normal globin. Could be used as an oxygen scavenger for sterol biosynthesis. In Ascaris suum (Pig roundworm), this protein is Extracellular globin.